We begin with the raw amino-acid sequence, 495 residues long: Putative aldehyde dehydrogenase AldA (495 aa).

212–218 lines the NAD(+) pocket; sequence GKGSESG. Catalysis depends on residues Glu256 and Cys290.

This sequence belongs to the aldehyde dehydrogenase family.

It carries out the reaction an aldehyde + NAD(+) + H2O = a carboxylate + NADH + 2 H(+). The polypeptide is Putative aldehyde dehydrogenase AldA (aldA) (Staphylococcus aureus (strain MRSA252)).